The following is an 879-amino-acid chain: Protein translocase subunit SecA (879 aa).

ATP-binding positions include glutamine 86, 104-108, and aspartate 500; that span reads GEGKT. Zn(2+) contacts are provided by cysteine 863, cysteine 865, cysteine 874, and histidine 875.

This sequence belongs to the SecA family. As to quaternary structure, monomer and homodimer. Part of the essential Sec protein translocation apparatus which comprises SecA, SecYEG and auxiliary proteins SecDF-YajC and YidC. It depends on Zn(2+) as a cofactor.

It is found in the cell inner membrane. The protein resides in the cytoplasm. The enzyme catalyses ATP + H2O + cellular proteinSide 1 = ADP + phosphate + cellular proteinSide 2.. Functionally, part of the Sec protein translocase complex. Interacts with the SecYEG preprotein conducting channel. Has a central role in coupling the hydrolysis of ATP to the transfer of proteins into and across the cell membrane, serving both as a receptor for the preprotein-SecB complex and as an ATP-driven molecular motor driving the stepwise translocation of polypeptide chains across the membrane. The polypeptide is Protein translocase subunit SecA (Orientia tsutsugamushi (strain Ikeda) (Rickettsia tsutsugamushi)).